A 229-amino-acid polypeptide reads, in one-letter code: Mannose-specific lectin TAR1 (229 aa).

The N-terminal stretch at 1 to 23 (MAKLLLFLLPAILGLLIPRSAVA) is a signal peptide. Bulb-type lectin domains are found at residues 26-131 (TNYL…PWVP) and 145-229 (DNLL…DYVL). Beta-D-mannose is bound by residues 51–55 (QNDCN), Y59, W63, Q64, 170–174 (QGDCN), Y178, and 182–185 (YGWQ). The short motif at 51–59 (QNDCNLVLY) is the Carbohydrate-binding motif 1 element. Intrachain disulfides connect C54–C74 and C173–C195. Positions 170 to 178 (QGDCNLVLY) match the Carbohydrate-binding motif 2 motif.

Forms heterotetramer of 2 chains 1 and 2 chains 2 arranged as a dimer of chain 1 and chain 2 heterodimers.

The protein resides in the secreted. In terms of biological role, mannose-specific lectin. Shows agglutinating activity towards erythrocytes from rabbit. In Colocasia esculenta (Wild taro), this protein is Mannose-specific lectin TAR1.